A 62-amino-acid chain; its full sequence is uncharacterized protein (62 aa).

This is an uncharacterized protein from Mesomycoplasma hyorhinis (Mycoplasma hyorhinis).